A 317-amino-acid chain; its full sequence is uncharacterized protein (317 aa).

This sequence to M.avium MAV169.

This is an uncharacterized protein from Mycobacterium tuberculosis (strain CDC 1551 / Oshkosh).